The following is a 258-amino-acid chain: Indole-3-glycerol phosphate synthase (258 aa).

This sequence belongs to the TrpC family.

The catalysed reaction is 1-(2-carboxyphenylamino)-1-deoxy-D-ribulose 5-phosphate + H(+) = (1S,2R)-1-C-(indol-3-yl)glycerol 3-phosphate + CO2 + H2O. Its pathway is amino-acid biosynthesis; L-tryptophan biosynthesis; L-tryptophan from chorismate: step 4/5. The sequence is that of Indole-3-glycerol phosphate synthase from Campylobacter jejuni subsp. jejuni serotype O:23/36 (strain 81-176).